Here is a 294-residue protein sequence, read N- to C-terminus: Tryptophan 2,3-dioxygenase (294 aa).

The tract at residues 1-20 (MSEFKGCPFSGAASEAGTKA) is disordered. Residues 63 to 67 (FIVQH), Tyr125, and Arg129 each bind substrate. His252 provides a ligand contact to heme. Substrate is bound at residue Thr266.

This sequence belongs to the tryptophan 2,3-dioxygenase family. Homotetramer. Heme serves as cofactor.

It catalyses the reaction L-tryptophan + O2 = N-formyl-L-kynurenine. Its pathway is amino-acid degradation; L-tryptophan degradation via kynurenine pathway; L-kynurenine from L-tryptophan: step 1/2. Its function is as follows. Heme-dependent dioxygenase that catalyzes the oxidative cleavage of the L-tryptophan (L-Trp) pyrrole ring and converts L-tryptophan to N-formyl-L-kynurenine. Catalyzes the oxidative cleavage of the indole moiety. The sequence is that of Tryptophan 2,3-dioxygenase from Cupriavidus necator (strain ATCC 17699 / DSM 428 / KCTC 22496 / NCIMB 10442 / H16 / Stanier 337) (Ralstonia eutropha).